Here is a 344-residue protein sequence, read N- to C-terminus: Sorting nexin-16 (344 aa).

Over residues 1–10 (MATPYVPVPM) the composition is skewed to pro residues. The segment at 1 to 72 (MATPYVPVPM…SASSMCGSPL (72 aa)) is disordered. Residues 14–26 (NSASSFTNNRNQR) show a composition bias toward polar residues. The segment covering 27 to 40 (SSSFGSVSTSSTSS) has biased composition (low complexity). The segment covering 52 to 68 (LKQTNVQDQMDSASSMC) has biased composition (polar residues). The PX domain occupies 105-218 (DRPSTPTILG…EFLCLDDPPG (114 aa)). A 1,2-diacyl-sn-glycero-3-phospho-(1D-myo-inositol-3-phosphate) contacts are provided by Arg-144, Thr-146, and Arg-184. Position 222 is a phosphoserine (Ser-222). The stretch at 223-278 (LEESRAFCETLEETNYHLQRELLEKQKEVESLKKLLGEKQLHIDALETRIRTLSLE) forms a coiled coil.

The protein belongs to the sorting nexin family. Homooligomer. Interacts with EGFR.

It is found in the early endosome membrane. The protein resides in the late endosome membrane. Its subcellular location is the cytoplasm. The protein localises to the lysosome. May be involved in several stages of intracellular trafficking. Plays a role in protein transport from early to late endosomes. Plays a role in protein transport to the lysosome. Promotes degradation of EGFR after EGF signaling. In Mus musculus (Mouse), this protein is Sorting nexin-16 (Snx16).